The sequence spans 74 residues: EMBRYO SURROUNDING FACTOR 1-like protein 4 (74 aa).

A signal peptide spans Met1–Cys22. 4 disulfide bridges follow: Cys36/Cys51, Cys41/Cys70, Cys49/Cys66, and Cys52/Cys59.

It belongs to the MEG family. As to expression, expressed in flowers.

The protein is EMBRYO SURROUNDING FACTOR 1-like protein 4 (ESFL4) of Arabidopsis thaliana (Mouse-ear cress).